Here is a 362-residue protein sequence, read N- to C-terminus: NAD(P)H-quinone oxidoreductase subunit 1, chloroplastic (362 aa).

A run of 8 helical transmembrane segments spans residues 31–51 (WVPLPILSLVIVATLGVLVIV), 99–119 (WLFTLGPAVVVIPIFLAYLVV), 132–152 (IGIFFWIAISSIAPIGLLMSG), 178–198 (LAICVLSVCLLADSLSTVDIV), 206–226 (ILTWNIWRQPIGFVAFLIAAL), 268–288 (LVSGCFVTVLYLGGWHGPFAI), 303–323 (AFLGITWTLLKTFLFLFAAIL), and 336–356 (LLDLGWKFLLPVSLGNLLLTA).

The protein belongs to the complex I subunit 1 family. In terms of assembly, NDH is composed of at least 16 different subunits, 5 of which are encoded in the nucleus.

It localises to the plastid. Its subcellular location is the chloroplast thylakoid membrane. It carries out the reaction a plastoquinone + NADH + (n+1) H(+)(in) = a plastoquinol + NAD(+) + n H(+)(out). The enzyme catalyses a plastoquinone + NADPH + (n+1) H(+)(in) = a plastoquinol + NADP(+) + n H(+)(out). Functionally, NDH shuttles electrons from NAD(P)H:plastoquinone, via FMN and iron-sulfur (Fe-S) centers, to quinones in the photosynthetic chain and possibly in a chloroplast respiratory chain. The immediate electron acceptor for the enzyme in this species is believed to be plastoquinone. Couples the redox reaction to proton translocation, and thus conserves the redox energy in a proton gradient. The protein is NAD(P)H-quinone oxidoreductase subunit 1, chloroplastic of Nephroselmis olivacea (Green alga).